Reading from the N-terminus, the 628-residue chain is tRNA uridine 5-carboxymethylaminomethyl modification enzyme MnmG (628 aa).

Residues Gly14–Gly19, Val126, and Ser181 contribute to the FAD site. Gly273–Phe287 is a binding site for NAD(+). Residue Gln370 coordinates FAD.

It belongs to the MnmG family. Homodimer. Heterotetramer of two MnmE and two MnmG subunits. It depends on FAD as a cofactor.

It is found in the cytoplasm. In terms of biological role, NAD-binding protein involved in the addition of a carboxymethylaminomethyl (cmnm) group at the wobble position (U34) of certain tRNAs, forming tRNA-cmnm(5)s(2)U34. The protein is tRNA uridine 5-carboxymethylaminomethyl modification enzyme MnmG of Exiguobacterium sibiricum (strain DSM 17290 / CCUG 55495 / CIP 109462 / JCM 13490 / 255-15).